Here is a 313-residue protein sequence, read N- to C-terminus: Lactamase-like protein ptaB (313 aa).

Residues histidine 104, histidine 106, aspartate 108, and histidine 109 each contribute to the Zn(2+) site. The active-site Proton donor/acceptor is aspartate 108.

It belongs to the metallo-beta-lactamase superfamily. The cofactor is Zn(2+).

It catalyses the reaction atrochrysone carboxyl-[ACP] + H2O = atrochrysone carboxylate + holo-[ACP] + H(+). The protein operates within secondary metabolite biosynthesis. Lactamase-like protein; part of the gene cluster that mediates the biosynthesis of pestheic acid, a diphenyl ether which is a biosynthetic precursor of the unique chloropupukeananes. The biosynthesis initiates from condensation of acetate and malonate units catalyzed by the non-reducing PKS ptaA. As the ptaA protein is TE/CLC domain-deficient, hydrolysis and Claisen cyclization of the polyketide could be catalyzed by ptaB containing a beta-lactamase domain. The ptaB protein might hydrolyze the thioester bond between the ACP of ptaA and the intermediate to release atrochrysone carboxylic acid, which is spontaneously dehydrated to form endocrocin anthrone. Endocrocin anthrone is then converted to endocrocin, catalyzed by the anthrone oxygenase ptaC. Spontaneous decarboxylation of endocrocin occurs to generate emodin. An O-methyltransferase (ptaH or ptaI) could methylate emodin to form physcion. PtaJ could then catalyze the oxidative cleavage of physcion, and rotation of the intermediate could then afford desmethylisosulochrin. PtaF, a putative NADH-dependent oxidoreductase, might also participate in the oxidative cleavage step. Desmethylisosulochrin is then transformed by another O-methyltransferase (ptaH or ptaI) to form isosulochrin. Chlorination of isosulochrin by ptaM in the cyclohexadienone B ring then produces chloroisosulochrin. PtaE is responsible for the oxidative coupling reactions of both benzophenones isosulochrin and chloroisosulochrin to RES-1214-1 and pestheic acid respectively, regardless of chlorination. This chain is Lactamase-like protein ptaB, found in Pestalotiopsis fici (strain W106-1 / CGMCC3.15140).